The primary structure comprises 219 residues: Probable transcriptional regulator flp (219 aa).

The 69-residue stretch at 144–212 (DSINVRLTHY…GKQVRILNAE (69 aa)) folds into the HTH crp-type domain. Positions 191–210 (KRLAEEKLIERSGKQVRILN) form a DNA-binding region, H-T-H motif.

This Lacticaseibacillus casei (Lactobacillus casei) protein is Probable transcriptional regulator flp (flp).